A 320-amino-acid polypeptide reads, in one-letter code: Acetyl-coenzyme A carboxylase carboxyl transferase subunit alpha (320 aa).

The CoA carboxyltransferase C-terminal domain occupies 33-294 (AFDTEIQALR…GDAVEDELKA (262 aa)).

It belongs to the AccA family. Acetyl-CoA carboxylase is a heterohexamer composed of biotin carboxyl carrier protein (AccB), biotin carboxylase (AccC) and two subunits each of ACCase subunit alpha (AccA) and ACCase subunit beta (AccD).

The protein localises to the cytoplasm. The catalysed reaction is N(6)-carboxybiotinyl-L-lysyl-[protein] + acetyl-CoA = N(6)-biotinyl-L-lysyl-[protein] + malonyl-CoA. It participates in lipid metabolism; malonyl-CoA biosynthesis; malonyl-CoA from acetyl-CoA: step 1/1. Component of the acetyl coenzyme A carboxylase (ACC) complex. First, biotin carboxylase catalyzes the carboxylation of biotin on its carrier protein (BCCP) and then the CO(2) group is transferred by the carboxyltransferase to acetyl-CoA to form malonyl-CoA. The chain is Acetyl-coenzyme A carboxylase carboxyl transferase subunit alpha from Caulobacter vibrioides (strain ATCC 19089 / CIP 103742 / CB 15) (Caulobacter crescentus).